Here is a 238-residue protein sequence, read N- to C-terminus: Large ribosomal subunit protein uL2 (238 aa).

The interval 199–238 (PHGGGLHQSVSRPSTVSRNAPPGRKVGHIAARRTGRKEGA) is disordered. A compositionally biased stretch (polar residues) spans 206 to 216 (QSVSRPSTVSR). A compositionally biased stretch (basic residues) spans 223-238 (KVGHIAARRTGRKEGA).

It belongs to the universal ribosomal protein uL2 family. Part of the 50S ribosomal subunit. Forms a bridge to the 30S subunit in the 70S ribosome.

In terms of biological role, one of the primary rRNA binding proteins. Required for association of the 30S and 50S subunits to form the 70S ribosome, for tRNA binding and peptide bond formation. It has been suggested to have peptidyltransferase activity; this is somewhat controversial. Makes several contacts with the 16S rRNA in the 70S ribosome. The chain is Large ribosomal subunit protein uL2 from Sulfurisphaera tokodaii (strain DSM 16993 / JCM 10545 / NBRC 100140 / 7) (Sulfolobus tokodaii).